Here is a 145-residue protein sequence, read N- to C-terminus: MGKGKPRGLNAARKLSNHRREQRWADLHYKKRLLGTAFKSSPFGGASHAKGIVLEKVGVEAKQPNSAIRKCVKVQLIKNGKKVTAFVPNDGCLNFIDENDEVLLAGFGRKGKAKGDIPGVRFKVVKVSGVGLLALWKEKKEKPRS.

The residue at position 64 (Pro-64) is a Hydroxyproline.

Belongs to the universal ribosomal protein uS12 family.

This Aspergillus fumigatus (strain ATCC MYA-4609 / CBS 101355 / FGSC A1100 / Af293) (Neosartorya fumigata) protein is Small ribosomal subunit protein uS12 (rps23).